The chain runs to 31 residues: Cliotide T13 (31 aa).

A cross-link (cyclopeptide (Asp-Asn)) is located at residues 1-31 (DTTPCGESCVWIPCVSSIVGCSCQNKVCYQN). 3 disulfides stabilise this stretch: Cys-5/Cys-21, Cys-9/Cys-23, and Cys-14/Cys-28.

Post-translationally, contains 3 disulfide bonds. In terms of processing, this is a cyclic peptide. In terms of tissue distribution, expressed in seed but not in root nodules.

In terms of biological role, probably participates in a plant defense mechanism. Not active against Gram-negative bacterium E.coli ATCC 700926 or Gram-positive bacterium S.aureus ATCC 12600 up to a concentration of 100 uM under low-salt conditions. This Clitoria ternatea (Butterfly pea) protein is Cliotide T13.